The following is a 258-amino-acid chain: Thiazole synthase (258 aa).

The active-site Schiff-base intermediate with DXP is the lysine 98. 1-deoxy-D-xylulose 5-phosphate-binding positions include glycine 159, 185–186, and 207–208; these read AG and NT.

This sequence belongs to the ThiG family. As to quaternary structure, homotetramer. Forms heterodimers with either ThiH or ThiS.

It localises to the cytoplasm. The enzyme catalyses [ThiS sulfur-carrier protein]-C-terminal-Gly-aminoethanethioate + 2-iminoacetate + 1-deoxy-D-xylulose 5-phosphate = [ThiS sulfur-carrier protein]-C-terminal Gly-Gly + 2-[(2R,5Z)-2-carboxy-4-methylthiazol-5(2H)-ylidene]ethyl phosphate + 2 H2O + H(+). It functions in the pathway cofactor biosynthesis; thiamine diphosphate biosynthesis. Functionally, catalyzes the rearrangement of 1-deoxy-D-xylulose 5-phosphate (DXP) to produce the thiazole phosphate moiety of thiamine. Sulfur is provided by the thiocarboxylate moiety of the carrier protein ThiS. In vitro, sulfur can be provided by H(2)S. The chain is Thiazole synthase from Bacillus cereus (strain ATCC 14579 / DSM 31 / CCUG 7414 / JCM 2152 / NBRC 15305 / NCIMB 9373 / NCTC 2599 / NRRL B-3711).